The following is a 424-amino-acid chain: Hemagglutinin-esterase (424 aa).

A signal peptide spans 1 to 16 (MFLLPRFVLVSCIIGS). Positions 7 to 127 (FVLVSCIIGS…SNDIWMQNKG (121 aa)) are esterase domain 1. Over 17-392 (LGFDNPPTNV…PICVYDPLPI (376 aa)) the chain is Virion surface. The active-site Nucleophile is the S40. The cysteines at positions 44 and 65 are disulfide-linked. N54, N89, N153, N236, and N301 each carry an N-linked (GlcNAc...) asparagine; by host glycan. 3 disulfides stabilise this stretch: C113/C162, C197/C276, and C205/C249. Residues 128 to 266 (LFYTQLYKNM…GNYLAISNEL (139 aa)) form a receptor binding region. The segment at 267–379 (LLTVPTKAIC…RCPTAADINT (113 aa)) is esterase domain 2. A disulfide bridge connects residues C307 and C312. The N-linked (GlcNAc...) asparagine; by host glycan is linked to N316. Active-site charge relay system residues include D326 and H329. The cysteines at positions 347 and 371 are disulfide-linked. N358 carries an N-linked (GlcNAc...) asparagine; by host glycan. Residues 393 to 413 (ILLGILLGVAVIIIVVLLLYF) form a helical membrane-spanning segment. Topologically, residues 414 to 424 (MVDNGTRLHDA) are intravirion. A glycan (N-linked (GlcNAc...) asparagine; by host) is linked at N417.

This sequence belongs to the influenza type C/coronaviruses hemagglutinin-esterase family. In terms of assembly, homodimer; disulfide-linked. Forms a complex with the M protein in the pre-Golgi. Associates then with S-M complex to form a ternary complex S-M-HE. N-glycosylated in the host RER.

The protein resides in the virion membrane. Its subcellular location is the host cell membrane. The enzyme catalyses N-acetyl-9-O-acetylneuraminate + H2O = N-acetylneuraminate + acetate + H(+). The catalysed reaction is N-acetyl-4-O-acetylneuraminate + H2O = N-acetylneuraminate + acetate + H(+). Functionally, structural protein that makes short spikes at the surface of the virus. Contains receptor binding and receptor-destroying activities. Mediates de-O-acetylation of N-acetyl-4-O-acetylneuraminic acid, which is probably the receptor determinant recognized by the virus on the surface of erythrocytes and susceptible cells. This receptor-destroying activity is important for virus release as it probably helps preventing self-aggregation and ensures the efficient spread of the progeny virus from cell to cell. May serve as a secondary viral attachment protein for initiating infection, the spike protein being the major one. May become a target for both the humoral and the cellular branches of the immune system. This chain is Hemagglutinin-esterase, found in Bovine coronavirus (strain LSU-94LSS-051) (BCoV-LSU).